The primary structure comprises 956 residues: Transient receptor potential channel pyrexia (956 aa).

The Cytoplasmic portion of the chain corresponds to 1-491 (MENVRFSIIE…LFLKWRRIRK (491 aa)). ANK repeat units follow at residues 132-161 (RGRTPLHFACCRANAPIAKVLLDFGADPNR), 166-195 (KEVTSLHCAASSKSVECILLLLRRKASINI), 198-227 (EKRSALHYAIDVNAVDCVEILLKYGADPNT), 231-260 (YTETPLHTASAAGFAKCVQLLLSHNADVRS), 265-294 (GKVTALHLAAENDYVECARLLLEHRAEVDC), 298-327 (SHQTPLHLACLSQSIGTVDLLISYGANVNA), 331-362 (DGRTALHAAIVKQSRSLDCCNALLKAGADVNK), and 366-395 (YGYTPLHIAALNEFSSCVYTFIEHGADITA). The chain crosses the membrane as a helical span at residues 492–512 (FFLMSLAYHTLFVILFTFYVI). Over 513–525 (WVYVRCCKKEELC) the chain is Extracellular. The helical transmembrane segment at 526-546 (VAPGYVSTIGYLVIILNLILL) threads the bilayer. Residues 547-565 (GKEVFQMAHGLRGYAKYWE) are Cytoplasmic-facing. A helical transmembrane segment spans residues 566-584 (NWLQWTIGTGVLLCVTPET). Residues 585–601 (VRTDDLTAVPVWQHHVA) are Extracellular-facing. A helical membrane pass occupies residues 602–622 (AIVILLVWLELMMLVGRFPIF). Over 623–638 (GVYVQMFTKVAVNFAK) the chain is Cytoplasmic. Residues 639 to 659 (FLLAYICLLVAFGLSFAVLFN) traverse the membrane as a helical segment. The Extracellular segment spans residues 660 to 701 (DYPAFENITWSFLKSITMMSGELEFEDIFYGDYAVKFPVTAH). Asn666 carries N-linked (GlcNAc...) asparagine glycosylation. The chain crosses the membrane as a helical span at residues 702-722 (IIFLSFVLLVTVILTNLMVGL). Residues 723-956 (AVSDIQGLQV…VASSHIRRHR (234 aa)) lie on the Cytoplasmic side of the membrane.

Belongs to the transient receptor (TC 1.A.4) family. STrpC subfamily. Homooligomer; between isoform A and isoform B. Expressed in various peripheral nerves and the central nerves in embryos. In adults, it is expressed in sensory neurons lying beneath the bristles around eyes, neurons innervating the bristles on the back of thorax and neurons in maxillary palps, proboscis and antennae. Expressed in multidendritic neurons, which mediate temperature sensing, as well as non-multidendritic neurons in larval epidermis. Localizes ubiquitously throughout neurites.

It localises to the membrane. Its function is as follows. Receptor-activated non-selective cation channel involved in protection or tolerance from high temperature stress. Activated by temperatures above 40 degrees Celsius. More permeable to K(+) than to Na(+). May act in stress protection allow flies to survive in natural environments. This chain is Transient receptor potential channel pyrexia (pyx), found in Drosophila melanogaster (Fruit fly).